A 375-amino-acid polypeptide reads, in one-letter code: Filamin-binding LIM protein 1 (375 aa).

Positions 1-70 are filamin-binding; sequence MASKPEKRVA…SPWTPPGRAA (70 aa). 2 disordered regions span residues 43–119 and 137–176; these read WEAP…PSEE and HLSPPLPPPPPQAPAERPSVQPSPLRPMEEELPPPPAERV. Pro residues-rich tracts occupy residues 104-114 and 140-149; these read FPPPPPPPPVL and PPLPPPPPQA. The segment covering 150–159 has biased composition (low complexity); it reads PAERPSVQPS. 3 consecutive LIM zinc-binding domains span residues 183 to 244, 245 to 302, and 303 to 372; these read DICA…TLER, CGKC…RKFA, and PVCS…RSAA. The interval 278–375 is FERMT2-binding; it reads IGDESFALGS…HVKRSAAGCC (98 aa).

As to quaternary structure, interacts with FERMT2, FLNA, FLNB and FLNC. Interacts with NKX2-5.

It is found in the cell junction. Its subcellular location is the focal adhesion. The protein resides in the cytoplasm. The protein localises to the cytoskeleton. It localises to the stress fiber. In terms of biological role, serves as an anchoring site for cell-ECM adhesion proteins and filamin-containing actin filaments. Is implicated in cell shape modulation (spreading) and motility. May participate in the regulation of filamin-mediated cross-linking and stabilization of actin filaments. May also regulate the assembly of filamin-containing signaling complexes that control actin assembly. Promotes dissociation of FLNA from ITGB3 and ITGB7. Promotes activation of integrins and regulates integrin-mediated cell-cell adhesion. The polypeptide is Filamin-binding LIM protein 1 (FBLIM1) (Pongo abelii (Sumatran orangutan)).